Reading from the N-terminus, the 470-residue chain is ATP synthase subunit beta (470 aa).

An ATP-binding site is contributed by G157 to T164.

The protein belongs to the ATPase alpha/beta chains family. As to quaternary structure, F-type ATPases have 2 components, CF(1) - the catalytic core - and CF(0) - the membrane proton channel. CF(1) has five subunits: alpha(3), beta(3), gamma(1), delta(1), epsilon(1). CF(0) has three main subunits: a(1), b(2) and c(9-12). The alpha and beta chains form an alternating ring which encloses part of the gamma chain. CF(1) is attached to CF(0) by a central stalk formed by the gamma and epsilon chains, while a peripheral stalk is formed by the delta and b chains.

Its subcellular location is the cell inner membrane. It carries out the reaction ATP + H2O + 4 H(+)(in) = ADP + phosphate + 5 H(+)(out). Its function is as follows. Produces ATP from ADP in the presence of a proton gradient across the membrane. The catalytic sites are hosted primarily by the beta subunits. The protein is ATP synthase subunit beta of Geobacter sp. (strain M21).